The sequence spans 861 residues: Valine--tRNA ligase (861 aa).

Residues 42-52 (PNITGRIHMGH) carry the 'HIGH' region motif. The short motif at 521 to 525 (KMSKS) is the 'KMSKS' region element. K524 contributes to the ATP binding site. The stretch at 792–861 (VAGLNLQSEI…ILNQILGDLM (70 aa)) forms a coiled coil.

The protein belongs to the class-I aminoacyl-tRNA synthetase family. ValS type 1 subfamily. In terms of assembly, monomer.

Its subcellular location is the cytoplasm. It catalyses the reaction tRNA(Val) + L-valine + ATP = L-valyl-tRNA(Val) + AMP + diphosphate. Catalyzes the attachment of valine to tRNA(Val). As ValRS can inadvertently accommodate and process structurally similar amino acids such as threonine, to avoid such errors, it has a 'posttransfer' editing activity that hydrolyzes mischarged Thr-tRNA(Val) in a tRNA-dependent manner. The protein is Valine--tRNA ligase of Pseudothermotoga lettingae (strain ATCC BAA-301 / DSM 14385 / NBRC 107922 / TMO) (Thermotoga lettingae).